The following is a 346-amino-acid chain: MVVKVGVIGTGAMGRAHIDRLTNVLTGAEVVAVTDIDHEAAEAAVRDFHLNAKVYPDDTSLLQDPDIDAVFVVSFGGAHEATVLKALDTDKFIFTEKPLATTLEGAKRIVDKELTKSKKVIQVGFMRRYDQGIRALKEKLDTGIIGAPLVVRASHINPNVASNYSNEMAITDTLIHEIDEMHWLLDDEYTSIQITYPRQSAEVRNEGLHDPQLATLTTKKGTVIQVLVHVTAQYGYEVKLEVIGETGELQLPNYGLGPILRSNANQQTAVEMSWINRFIQAYNTEVQEFIDQVAKSEPPVGPSAWDGYIAAITAAAANRSQKDQETVLINVAGTPTFYQNKNAIHA.

Belongs to the Gfo/Idh/MocA family. Homotetramer.

It catalyses the reaction myo-inositol + NAD(+) = scyllo-inosose + NADH + H(+). The enzyme catalyses 1D-chiro-inositol + NAD(+) = scyllo-inosine + NADH + H(+). It participates in polyol metabolism; myo-inositol degradation into acetyl-CoA; acetyl-CoA from myo-inositol: step 1/7. Functionally, involved in the oxidation of myo-inositol (MI) and D-chiro-inositol (DCI) to 2-keto-myo-inositol (2KMI or 2-inosose) and 1-keto-D-chiro-inositol (1KDCI), respectively. This Lacticaseibacillus casei (Lactobacillus casei) protein is Inositol 2-dehydrogenase/D-chiro-inositol 3-dehydrogenase.